The following is a 473-amino-acid chain: Envelope glycoprotein M (473 aa).

Over Met1–Gln32 the chain is Intravirion. The helical transmembrane segment at Val33–Phe53 threads the bilayer. Topologically, residues Arg54–Ser90 are virion surface. Residues Leu91 to Val111 form a helical membrane-spanning segment. The Intravirion portion of the chain corresponds to Gly112–His137. Residues Ala138–Ala158 traverse the membrane as a helical segment. Residues His159 to Gln163 lie on the Virion surface side of the membrane. The chain crosses the membrane as a helical span at residues Leu164–Cys184. Over Thr185–Ala216 the chain is Intravirion. A helical membrane pass occupies residues Val217–Leu237. At Asn238–Pro250 the chain is on the virion surface side. Residues Gly251–Val271 form a helical membrane-spanning segment. The Intravirion segment spans residues Glu272–Arg280. The helical transmembrane segment at Val281 to Glu301 threads the bilayer. The Virion surface segment spans residues His302–Ala318. A helical membrane pass occupies residues Gln319–Leu339. At Arg340–Trp473 the chain is on the intravirion side. Disordered regions lie at residues Lys371 to Ala399 and His440 to Trp473.

This sequence belongs to the herpesviridae glycoprotein M family. In terms of assembly, interacts (via N-terminus) with gN (via N-terminus). The gM-gN heterodimer forms the gCII complex.

It is found in the virion membrane. Its subcellular location is the host Golgi apparatus. The protein resides in the host trans-Golgi network. It localises to the host endosome membrane. The protein localises to the host nucleus inner membrane. Envelope glycoprotein important for virion assembly and egress. Plays a role in the correct incorporation of gH-gL into virion membrane. Directs the glycoprotein N (gN) to the host trans-Golgi network. This Human herpesvirus 1 (strain 17) (HHV-1) protein is Envelope glycoprotein M.